A 437-amino-acid polypeptide reads, in one-letter code: Cytochrome b (437 aa).

Residues 45–65 traverse the membrane as a helical segment; sequence WIWGIVLAFTLVLQIVTGIVL. Residues H97 and H111 each coordinate heme b. Transmembrane regions (helical) follow at residues 100–120, 129–149, 156–176, 194–214, 248–268, 298–318, 330–350, 365–385, and 391–411; these read GASL…YYGS, WIVG…GYVL, FWGA…GPSI, FFSL…IHIW, FVIK…AVVA, FLPF…VILV, FFGV…PWLD, MWFW…AMPT, and WISL…LPLL. Residues H198 and H212 each contribute to the heme b site.

The protein belongs to the cytochrome b family. In terms of assembly, the main subunits of complex b-c1 are: cytochrome b, cytochrome c1 and the Rieske protein. The cofactor is heme b.

It is found in the cell membrane. Component of the ubiquinol-cytochrome c reductase complex (complex III or cytochrome b-c1 complex), which is a respiratory chain that generates an electrochemical potential coupled to ATP synthesis. The sequence is that of Cytochrome b (petB) from Rhodobacter capsulatus (strain ATCC BAA-309 / NBRC 16581 / SB1003).